The sequence spans 174 residues: Endoribonuclease YbeY (174 aa).

Histidine 129, histidine 133, and histidine 139 together coordinate Zn(2+).

This sequence belongs to the endoribonuclease YbeY family. It depends on Zn(2+) as a cofactor.

It is found in the cytoplasm. Its function is as follows. Single strand-specific metallo-endoribonuclease involved in late-stage 70S ribosome quality control and in maturation of the 3' terminus of the 16S rRNA. This Lactobacillus helveticus (strain DPC 4571) protein is Endoribonuclease YbeY.